A 414-amino-acid chain; its full sequence is Serine hydroxymethyltransferase (414 aa).

(6S)-5,6,7,8-tetrahydrofolate-binding positions include Leu121 and 125–127 (GHL). The residue at position 229 (Lys229) is an N6-(pyridoxal phosphate)lysine.

This sequence belongs to the SHMT family. Homodimer. It depends on pyridoxal 5'-phosphate as a cofactor.

It localises to the cytoplasm. It carries out the reaction (6R)-5,10-methylene-5,6,7,8-tetrahydrofolate + glycine + H2O = (6S)-5,6,7,8-tetrahydrofolate + L-serine. It participates in one-carbon metabolism; tetrahydrofolate interconversion. The protein operates within amino-acid biosynthesis; glycine biosynthesis; glycine from L-serine: step 1/1. In terms of biological role, catalyzes the reversible interconversion of serine and glycine with tetrahydrofolate (THF) serving as the one-carbon carrier. This reaction serves as the major source of one-carbon groups required for the biosynthesis of purines, thymidylate, methionine, and other important biomolecules. Also exhibits THF-independent aldolase activity toward beta-hydroxyamino acids, producing glycine and aldehydes, via a retro-aldol mechanism. The protein is Serine hydroxymethyltransferase of Janthinobacterium sp. (strain Marseille) (Minibacterium massiliensis).